Consider the following 262-residue polypeptide: Cytochrome b mRNA maturase bI2 (262 aa).

It belongs to the LAGLIDADG endonuclease family.

Its subcellular location is the mitochondrion. In terms of biological role, this protein is responsible for splicing and maturation of cytochrome b mRNA. Specifically, it may be responsible for the splicing specificity of the second intron. In Debaryomyces hansenii (strain ATCC 36239 / CBS 767 / BCRC 21394 / JCM 1990 / NBRC 0083 / IGC 2968) (Yeast), this protein is Cytochrome b mRNA maturase bI2 (bI2).